The primary structure comprises 124 residues: Kalata-B1 (124 aa).

A signal peptide spans 1-22 (MAKFTVCLLLCLLLAAFVGAFG). Positions 23-88 (SELSDSHKTT…QVFLKQLQLK (66 aa)) are excised as a propeptide. The segment at residues 89 to 117 (GLPVCGETCVGGTCNTPGCTCSWPVCTRN) is a cross-link (cyclopeptide (Gly-Asn)). Intrachain disulfides connect Cys-93-Cys-107, Cys-97-Cys-109, and Cys-102-Cys-114. The propeptide occupies 118–124 (GLPSLAA).

Belongs to the cyclotide family. Moebius subfamily. In terms of processing, kalata-B1 is a cyclic peptide which occurs in three forms: with unmodified Trp-111, with Trp-111 oxidized to form oxindolylalanine and with Trp-111 oxidized to form N-formylkynurenine. Oxidation is enhanced by exposure to sunlight. Leaves and stems. Lower in roots.

Functionally, probably participates in a plant defense mechanism. Has antibiotic activity. Has a diuretic effect. Has a uterotonic effect in humans. Active against the Gram-positive S.aureus with a minimum inhibition concentration of approximately 0.2 microM. Relatively ineffective against Gram-negative bacteria such as E.coli and P.aeruginosa. Inhibitory effect on the growth and development of larvae from H.punctigera. The unmodified form has hemolytic activity, the oxidized form lacks hemolytic activity. If the protein is linearized, hemolytic activity is lost. In Oldenlandia affinis, this protein is Kalata-B1 (OAK1).